The chain runs to 180 residues: Large ribosomal subunit protein uL5 (180 aa).

Belongs to the universal ribosomal protein uL5 family. As to quaternary structure, part of the 50S ribosomal subunit; part of the 5S rRNA/L5/L18/L25 subcomplex. Contacts the 5S rRNA and the P site tRNA. Forms a bridge to the 30S subunit in the 70S ribosome.

This is one of the proteins that bind and probably mediate the attachment of the 5S RNA into the large ribosomal subunit, where it forms part of the central protuberance. In the 70S ribosome it contacts protein S13 of the 30S subunit (bridge B1b), connecting the 2 subunits; this bridge is implicated in subunit movement. Contacts the P site tRNA; the 5S rRNA and some of its associated proteins might help stabilize positioning of ribosome-bound tRNAs. The sequence is that of Large ribosomal subunit protein uL5 from Streptococcus pyogenes serotype M49 (strain NZ131).